Reading from the N-terminus, the 191-residue chain is Glucose-6-phosphate 1-dehydrogenase (191 aa).

Ala2 is subject to N-acetylalanine. Residue Ser8 is modified to Phosphoserine. Thr10 carries the post-translational modification Phosphothreonine. NADP(+) contacts are provided by residues 38–45 and Tyr86; that span reads GASGDLAK. D-glucose 6-phosphate is bound at residue Asp101. His106 serves as the catalytic Proton acceptor. Arg163 contacts NADP(+). At Lys173 the chain carries N6-acetyllysine. NADP(+) contacts are provided by Tyr179 and Trp185. Tyr179 carries the post-translational modification Phosphotyrosine.

Belongs to the glucose-6-phosphate dehydrogenase family. Homotetramer; dimer of dimers. Interacts with SIRT2; the interaction is enhanced by H(2)O(2) treatment. Forms a ternary complex with ALDOB and TP53; this interaction is direct. ALDOB stabilizes the complex inhibiting G6PD activity and keeping oxidative pentose phosphate metabolism in check. Post-translationally, acetylated by ELP3; acetylation inhibits its homodimerization and enzyme activity. Deacetylated by SIRT2; deacetylation stimulates its enzyme activity.

Its subcellular location is the cytoplasm. The protein resides in the cytosol. It is found in the membrane. The enzyme catalyses D-glucose 6-phosphate + NADP(+) = 6-phospho-D-glucono-1,5-lactone + NADPH + H(+). The protein operates within carbohydrate degradation; pentose phosphate pathway; D-ribulose 5-phosphate from D-glucose 6-phosphate (oxidative stage): step 1/3. Its function is as follows. Cytosolic glucose-6-phosphate dehydrogenase that catalyzes the first and rate-limiting step of the oxidative branch within the pentose phosphate pathway/shunt, an alternative route to glycolysis for the dissimilation of carbohydrates and a major source of reducing power and metabolic intermediates for fatty acid and nucleic acid biosynthetic processes. This Didelphis virginiana (North American opossum) protein is Glucose-6-phosphate 1-dehydrogenase (G6PD).